The primary structure comprises 381 residues: MGPIGTEADENQTVEEIKVEPYGPGHTTPRGELAPDPEPELIDSTKLTEVRVVLILAYCSIILLGVVGNSLVIHVVIKFKSMRTVTNFFIANLAVADLLVNTLCLPFTLTYTLMGEWKMGPVLCHLVPYAQGLAVQVSTVTLTVIALDRHRCIVYHLDSKISKQNSFLIIGLAWGISALLASPLAIFREYSLIEIIPDFEIVACTEKWPGEEKSIYGTVYSLSSLLILYVLPLGIISVSYVRIWSKLKNHVSPGAANDHYHQRRQKTTKMLVFVVVVFAVSWLPLHAFQLAVDIDSQVLDLKEYKLIFTVFHIIAMCSTFANPLLYGWMNSNYRKAFLSAFRCQQRLDAIQSEVCVTGKAKTNVEVEKNHGAADSAEATNV.

A disordered region spans residues 1–37 (MGPIGTEADENQTVEEIKVEPYGPGHTTPRGELAPDP). The Extracellular portion of the chain corresponds to 1 to 52 (MGPIGTEADENQTVEEIKVEPYGPGHTTPRGELAPDPEPELIDSTKLTEVRV). N-linked (GlcNAc...) asparagine glycosylation occurs at Asn-11. The helical transmembrane segment at 53–73 (VLILAYCSIILLGVVGNSLVI) threads the bilayer. The Cytoplasmic segment spans residues 74–87 (HVVIKFKSMRTVTN). A helical membrane pass occupies residues 88–108 (FFIANLAVADLLVNTLCLPFT). Topologically, residues 109 to 125 (LTYTLMGEWKMGPVLCH) are extracellular. Cys-124 and Cys-204 form a disulfide bridge. Residues 126-146 (LVPYAQGLAVQVSTVTLTVIA) traverse the membrane as a helical segment. Residues 147 to 166 (LDRHRCIVYHLDSKISKQNS) are Cytoplasmic-facing. The chain crosses the membrane as a helical span at residues 167 to 187 (FLIIGLAWGISALLASPLAIF). The Extracellular portion of the chain corresponds to 188 to 217 (REYSLIEIIPDFEIVACTEKWPGEEKSIYG). The helical transmembrane segment at 218–238 (TVYSLSSLLILYVLPLGIISV) threads the bilayer. The Cytoplasmic portion of the chain corresponds to 239–269 (SYVRIWSKLKNHVSPGAANDHYHQRRQKTTK). A helical transmembrane segment spans residues 270-290 (MLVFVVVVFAVSWLPLHAFQL). Over 291-305 (AVDIDSQVLDLKEYK) the chain is Extracellular. A helical transmembrane segment spans residues 306 to 326 (LIFTVFHIIAMCSTFANPLLY). The Cytoplasmic portion of the chain corresponds to 327-381 (GWMNSNYRKAFLSAFRCQQRLDAIQSEVCVTGKAKTNVEVEKNHGAADSAEATNV). A lipid anchor (S-palmitoyl cysteine) is attached at Cys-343.

This sequence belongs to the G-protein coupled receptor 1 family.

It is found in the cell membrane. Functionally, receptor for neuropeptide Y and peptide YY. This Cavia porcellus (Guinea pig) protein is Neuropeptide Y receptor type 2 (NPY2R).